The chain runs to 505 residues: GMP synthase [glutamine-hydrolyzing] (505 aa).

One can recognise a Glutamine amidotransferase type-1 domain in the interval 3-190; that stretch reads KVLVVNFGGQ…LRKIARISDV (188 aa). Catalysis depends on C80, which acts as the Nucleophile. Residues H164 and E166 contribute to the active site. Residues 191-380 enclose the GMPS ATP-PPase domain; the sequence is WRPEDQITRI…LGLPEDVVYR (190 aa). 218–224 serves as a coordination point for ATP; sequence SGGVDST.

It catalyses the reaction XMP + L-glutamine + ATP + H2O = GMP + L-glutamate + AMP + diphosphate + 2 H(+). Its pathway is purine metabolism; GMP biosynthesis; GMP from XMP (L-Gln route): step 1/1. Catalyzes the synthesis of GMP from XMP. This Pyrobaculum aerophilum (strain ATCC 51768 / DSM 7523 / JCM 9630 / CIP 104966 / NBRC 100827 / IM2) protein is GMP synthase [glutamine-hydrolyzing].